A 205-amino-acid chain; its full sequence is Ribosomal RNA small subunit methyltransferase G (205 aa).

Residues glycine 73, leucine 78, 124-125 (VE), and arginine 139 each bind S-adenosyl-L-methionine.

The protein belongs to the methyltransferase superfamily. RNA methyltransferase RsmG family.

The protein resides in the cytoplasm. The catalysed reaction is guanosine(527) in 16S rRNA + S-adenosyl-L-methionine = N(7)-methylguanosine(527) in 16S rRNA + S-adenosyl-L-homocysteine. Its function is as follows. Specifically methylates the N7 position of guanine in position 527 of 16S rRNA. This Erwinia tasmaniensis (strain DSM 17950 / CFBP 7177 / CIP 109463 / NCPPB 4357 / Et1/99) protein is Ribosomal RNA small subunit methyltransferase G.